A 201-amino-acid chain; its full sequence is Superoxide dismutase [Fe] (201 aa).

Positions 27, 79, 161, and 165 each coordinate Fe cation.

It belongs to the iron/manganese superoxide dismutase family. As to quaternary structure, homodimer. The cofactor is Fe cation.

The catalysed reaction is 2 superoxide + 2 H(+) = H2O2 + O2. Functionally, destroys superoxide anion radicals which are normally produced within the cells and which are toxic to biological systems. The chain is Superoxide dismutase [Fe] (sodB) from Synechococcus elongatus (strain ATCC 33912 / PCC 7942 / FACHB-805) (Anacystis nidulans R2).